A 148-amino-acid chain; its full sequence is Probable glycine cleavage system H protein 2 (148 aa).

The Lipoyl-binding domain maps to 32-114 (VIVVGITDIA…YGKGWLVKMK (83 aa)). At lysine 73 the chain carries N6-lipoyllysine.

It belongs to the GcvH family. In terms of assembly, the glycine cleavage system is composed of four proteins: P, T, L and H. (R)-lipoate is required as a cofactor.

In terms of biological role, the glycine cleavage system catalyzes the degradation of glycine. The H protein shuttles the methylamine group of glycine from the P protein to the T protein. The polypeptide is Probable glycine cleavage system H protein 2 (Sulfurisphaera tokodaii (strain DSM 16993 / JCM 10545 / NBRC 100140 / 7) (Sulfolobus tokodaii)).